We begin with the raw amino-acid sequence, 1039 residues long: Beta-galactosidase (1039 aa).

The substrate site is built by asparagine 103 and aspartate 201. Residue aspartate 201 participates in Na(+) binding. Mg(2+) contacts are provided by glutamate 415, histidine 417, and glutamate 460. Residues glutamate 460 and 536–539 (EYAH) each bind substrate. Residue glutamate 460 is the Proton donor of the active site. Glutamate 536 (nucleophile) is an active-site residue. Residue asparagine 596 participates in Mg(2+) binding. Phenylalanine 600 and asparagine 603 together coordinate Na(+). The substrate site is built by asparagine 603 and tryptophan 1012.

It belongs to the glycosyl hydrolase 2 family. Homotetramer. Requires Mg(2+) as cofactor. It depends on Na(+) as a cofactor.

The enzyme catalyses Hydrolysis of terminal non-reducing beta-D-galactose residues in beta-D-galactosides.. Inhibited by zinc, copper and nickel ions. Activated by 2-mercaptoethanol and inhibited by EDTA in vitro. The chain is Beta-galactosidase (lacZ) from Pseudoalteromonas haloplanktis (Alteromonas haloplanktis).